A 414-amino-acid polypeptide reads, in one-letter code: Serine hydroxymethyltransferase (414 aa).

(6S)-5,6,7,8-tetrahydrofolate contacts are provided by residues Leu-117 and 121-123 (GHL). At Lys-226 the chain carries N6-(pyridoxal phosphate)lysine.

It belongs to the SHMT family. As to quaternary structure, homodimer. It depends on pyridoxal 5'-phosphate as a cofactor.

The protein resides in the cytoplasm. It catalyses the reaction (6R)-5,10-methylene-5,6,7,8-tetrahydrofolate + glycine + H2O = (6S)-5,6,7,8-tetrahydrofolate + L-serine. The protein operates within one-carbon metabolism; tetrahydrofolate interconversion. It functions in the pathway amino-acid biosynthesis; glycine biosynthesis; glycine from L-serine: step 1/1. Functionally, catalyzes the reversible interconversion of serine and glycine with tetrahydrofolate (THF) serving as the one-carbon carrier. This reaction serves as the major source of one-carbon groups required for the biosynthesis of purines, thymidylate, methionine, and other important biomolecules. Also exhibits THF-independent aldolase activity toward beta-hydroxyamino acids, producing glycine and aldehydes, via a retro-aldol mechanism. In Dictyoglomus thermophilum (strain ATCC 35947 / DSM 3960 / H-6-12), this protein is Serine hydroxymethyltransferase.